A 95-amino-acid chain; its full sequence is uncharacterized protein (95 aa).

Residues Met-1–Leu-73 are disordered. Composition is skewed to polar residues over residues Ser-42–Pro-52 and Gly-62–Leu-73.

This is an uncharacterized protein from Homo sapiens (Human).